Consider the following 368-residue polypeptide: MKWHRGRLTQTLGAMGLTATLTVAAQAAGQGDMLDLAPMPPAKAGNPAMIELGKQFFFDRRLSGDWGVSCASCHDPAKGWGDGLALSKGYPSMEYFRNSPTVLNAAHRKRFLWDGRLDGADPGTLARDMITEAHTMNMDGRLMQERLQQVPEYAALWQKWRNDDINGMRVFNAVGEFITSLETRNAPFDDFAKGDSTAITKEAQHGYALFKGKAGCVSCHNGPIGSDGKLHKTGVPEHPDVLNNPLRTITMLRHYATSGMPNYMSARSDVGAYAISKDERDVGKFQTAQLRDLKYTAPYMHNGVFDTLEEVVAFYNQGGGEGSALSPLTLSTAEQQALVAFLLTLSGDPLIVEDPGQPDMQPRVFGKN.

Positions 1 to 27 (MKWHRGRLTQTLGAMGLTATLTVAAQA) are cleaved as a signal peptide. 2 consecutive Cytochrome c domains span residues 48 to 158 (AMIE…ALWQ) and 201 to 346 (KEAQ…LTLS). Heme c is bound by residues C70, C73, H74, C216, C219, and H220.

The iodate reductase (Idr) complex is composed of a molybdopterin-dependent iodate reductase (IdrA and IdrB subunits) and two associated peroxidases (IdrP1 and IdrP2). Heme c is required as a cofactor.

The protein resides in the periplasm. The catalysed reaction is 2 Fe(II)-[cytochrome c] + H2O2 + 2 H(+) = 2 Fe(III)-[cytochrome c] + 2 H2O. Involved in iodate respiration. Probably reduces the H(2)O(2) produced by IdrA/IdrB to H(2)O, using a reduced cytochrome c as the electron donor. The protein is Cytochrome-c peroxidase IdrP2 of Pseudomonas sp. (strain SCT).